Consider the following 803-residue polypeptide: Leucine--tRNA ligase (803 aa).

Positions 40-51 (PYPSGAGLHVGH) match the 'HIGH' region motif. The 'KMSKS' region motif lies at 575–579 (KMSKS). K578 serves as a coordination point for ATP.

The protein belongs to the class-I aminoacyl-tRNA synthetase family.

The protein resides in the cytoplasm. It catalyses the reaction tRNA(Leu) + L-leucine + ATP = L-leucyl-tRNA(Leu) + AMP + diphosphate. This Listeria monocytogenes serotype 4b (strain F2365) protein is Leucine--tRNA ligase.